A 137-amino-acid polypeptide reads, in one-letter code: Transcription antitermination protein NusB (137 aa).

Belongs to the NusB family.

Involved in transcription antitermination. Required for transcription of ribosomal RNA (rRNA) genes. Binds specifically to the boxA antiterminator sequence of the ribosomal RNA (rrn) operons. The sequence is that of Transcription antitermination protein NusB from Finegoldia magna (strain ATCC 29328 / DSM 20472 / WAL 2508) (Peptostreptococcus magnus).